Reading from the N-terminus, the 749-residue chain is Transcription factor RFX3 (749 aa).

A DNA-binding region (RFX-type winged-helix) is located at residues 183-258 (HLQWLLDNYE…YHYYGIRVKP (76 aa)). The interval 663 to 699 (VSPGNLDKDEGSEVESEMDEELDDSSEPQAKREKTEL) is disordered. A compositionally biased stretch (acidic residues) spans 674–688 (SEVESEMDEELDDSS).

Belongs to the RFX family. In terms of assembly, heterodimer; heterodimerizes with RFX1 and RFX2, and RFX6.

The protein localises to the nucleus. In terms of biological role, transcription factor required for ciliogenesis and islet cell differentiation during endocrine pancreas development. Essential for the differentiation of nodal monocilia and left-right asymmetry specification during embryogenesis. Required for the biogenesis of motile cilia by governing growth and beating efficiency of motile cells. Also required for ciliated ependymal cell differentiation. Regulates the expression of genes involved in ciliary assembly (DYNC2LI1, FOXJ1 and BBS4) and genes involved in ciliary motility (DNAH11, DNAH9 and DNAH5). Together with RFX6, participates in the differentiation of 4 of the 5 islet cell types during endocrine pancreas development, with the exception of pancreatic PP (polypeptide-producing) cells. Regulates transcription by forming a heterodimer with another RFX protein and binding to the X-box in the promoter of target genes. Represses transcription of MAP1A in non-neuronal cells but not in neuronal cells. This chain is Transcription factor RFX3 (RFX3), found in Macaca fascicularis (Crab-eating macaque).